The sequence spans 221 residues: MSKPSLELKGASFTLSVLHINSSDLNAVMAELDSKLAQAPQFFLGAPLVVNLSAIQDNDFNLHGLKELLLSRQLVIVGITGATIALSNQAKTLGLAIVKAGKQSVTPPPAPRQTKVLKQNIRSGQQVYAKNGDLIIFGAVGNGAEVIADGSIHIYGALRGKAMAGAAGDSSAVIIAHSLEAELVSIAGQYWLAENLQQHSSDKSGCIRLNGESLIVESLPL.

This sequence belongs to the MinC family. As to quaternary structure, interacts with MinD and FtsZ.

Cell division inhibitor that blocks the formation of polar Z ring septums. Rapidly oscillates between the poles of the cell to destabilize FtsZ filaments that have formed before they mature into polar Z rings. Prevents FtsZ polymerization. The sequence is that of Probable septum site-determining protein MinC from Shewanella sp. (strain MR-7).